A 95-amino-acid chain; its full sequence is MYGLINIGFGNIVVGDRVIAIVSPTSQPLKRLKEIAEQQGKLLEVNHGRKTRAFIITDSGHVIASAIQPETITNRFLQNYYDIEKVLDKIRKEVL.

It belongs to the RemA family.

The chain is Putative regulatory protein Pmob_0099 from Petrotoga mobilis (strain DSM 10674 / SJ95).